We begin with the raw amino-acid sequence, 354 residues long: Prephenate dehydrogenase (354 aa).

The Prephenate/arogenate dehydrogenase domain occupies 2-283 (KKILIIGLGL…AMEIHKGALP (282 aa)). Residue 3–33 (KILIIGLGLIGSSIALGIKKAHPEFEILGSD) participates in NAD(+) binding. The ACT domain maps to 287-354 (DLFISVPDEK…IEKATDFTVV (68 aa)).

The protein belongs to the prephenate/arogenate dehydrogenase family.

The enzyme catalyses prephenate + NAD(+) = 3-(4-hydroxyphenyl)pyruvate + CO2 + NADH. It functions in the pathway amino-acid biosynthesis; L-tyrosine biosynthesis; (4-hydroxyphenyl)pyruvate from prephenate (NAD(+) route): step 1/1. The sequence is that of Prephenate dehydrogenase (tyrA) from Lactococcus lactis subsp. cremoris (strain MG1363).